Here is a 59-residue protein sequence, read N- to C-terminus: Large ribosomal subunit protein bL32 (59 aa).

Belongs to the bacterial ribosomal protein bL32 family.

The chain is Large ribosomal subunit protein bL32 from Mesoplasma florum (strain ATCC 33453 / NBRC 100688 / NCTC 11704 / L1) (Acholeplasma florum).